The chain runs to 371 residues: MSKIVIGLSGGVDSSVAAYLLKQQGHEVIGLFMRNWDSLVNSDILGNSSLNQSLCPQEQDFQDASRVAKQIGIPIYRVDFIKEYWDSVFENLIEQYQNGFTPNPDILCNKYIKFDKFFNYAIEKFGADYVAMGHYAIAKEGNLYRGIDQSKDQSYFLTQVRSQVLEKVIFPLGNMEKSEVRRIAQEANLYTANKKDSTGICFIGERKFTDFLQNYIPTQPGTIVDITTKKIVGNHIGAMYYTLGQRKGLNLGGMKEPYFVVGHDLEKKQVFVAPASEKKWLTSNWLFAQNLNLNNHDFNPENLSAKFRYRQKDVRVKVEFLENDQIKVYYPEGFEAVTPGQQIALYDGQKCLGGAVIKNIYWNENELNYSV.

ATP is bound by residues 7–14 and methionine 33; that span reads GLSGGVDS. The interaction with target base in tRNA stretch occupies residues 103–105; it reads NPD. Cysteine 108 serves as the catalytic Nucleophile. The cysteines at positions 108 and 201 are disulfide-linked. Glycine 133 is a binding site for ATP. The tract at residues 151-153 is interaction with tRNA; the sequence is KDQ. The Cysteine persulfide intermediate role is filled by cysteine 201. Residues 308 to 309 form an interaction with tRNA region; it reads RY.

It belongs to the MnmA/TRMU family.

It localises to the cytoplasm. The catalysed reaction is S-sulfanyl-L-cysteinyl-[protein] + uridine(34) in tRNA + AH2 + ATP = 2-thiouridine(34) in tRNA + L-cysteinyl-[protein] + A + AMP + diphosphate + H(+). Catalyzes the 2-thiolation of uridine at the wobble position (U34) of tRNA, leading to the formation of s(2)U34. The polypeptide is tRNA-specific 2-thiouridylase MnmA (Mycoplasmopsis pulmonis (strain UAB CTIP) (Mycoplasma pulmonis)).